Consider the following 198-residue polypeptide: Charged multivesicular body protein 2a homolog 2 (198 aa).

A coiled-coil region spans residues 11–42 (KEVLRENQRNLNKSMREIDRERVALQNQEKKI).

This sequence belongs to the SNF7 family. As to quaternary structure, probable core component of the endosomal sorting required for transport complex III (ESCRT-III). ESCRT-III components are thought to multimerize to form a flat lattice on the perimeter membrane of the endosome.

It is found in the endosome membrane. Probable core component of the endosomal sorting required for transport complex III (ESCRT-III) which is involved in multivesicular bodies (MVBs) formation and sorting of endosomal cargo proteins into MVBs. MVBs contain intraluminal vesicles (ILVs) that are generated by invagination and scission from the limiting membrane of the endosome and are delivered to lysosomes enabling degradation of membrane proteins. This Dictyostelium discoideum (Social amoeba) protein is Charged multivesicular body protein 2a homolog 2 (chmp2a2).